The primary structure comprises 515 residues: 1-pyrroline-5-carboxylate dehydrogenase (515 aa).

Residues glutamate 286 and cysteine 320 contribute to the active site.

It belongs to the aldehyde dehydrogenase family. RocA subfamily.

It catalyses the reaction L-glutamate 5-semialdehyde + NAD(+) + H2O = L-glutamate + NADH + 2 H(+). Its pathway is amino-acid degradation; L-proline degradation into L-glutamate; L-glutamate from L-proline: step 2/2. The chain is 1-pyrroline-5-carboxylate dehydrogenase from Bacillus cereus (strain ATCC 10987 / NRS 248).